Here is a 910-residue protein sequence, read N- to C-terminus: UPF0182 protein Acid_6445 (910 aa).

7 helical membrane passes run 17 to 37, 56 to 76, 101 to 121, 157 to 177, 210 to 229, 252 to 272, and 276 to 296; these read ITLL…AGYA, LYYG…ALWI, LALL…WTVV, LLRS…WIAA, FLRG…FYLG, IGLP…AFVA, and WFLA…PRIV.

It belongs to the UPF0182 family.

The protein resides in the cell membrane. This Solibacter usitatus (strain Ellin6076) protein is UPF0182 protein Acid_6445.